Consider the following 581-residue polypeptide: Putative aluminum-activated malate transporter 3 (581 aa).

The next 6 membrane-spanning stretches (helical) occupy residues 98–118, 122–142, 148–164, 167–187, 201–218, and 231–251; these read MGLA…GLEL, YLWA…ATFS, GLGT…MSWI, MTGN…AFFA, YGFR…VSGY, and FLLI…IYPI.

This sequence belongs to the aromatic acid exporter (TC 2.A.85) family.

The protein localises to the membrane. In terms of biological role, malate transporter. The polypeptide is Putative aluminum-activated malate transporter 3 (ALMT3) (Arabidopsis thaliana (Mouse-ear cress)).